A 392-amino-acid polypeptide reads, in one-letter code: Chorismate synthase (392 aa).

NADP(+) contacts are provided by R39 and R45. FMN-binding positions include 131–133, 255–256, G300, 315–319, and R341; these read RSS, NA, and KPIPT.

The protein belongs to the chorismate synthase family. As to quaternary structure, homotetramer. Requires FMNH2 as cofactor.

The enzyme catalyses 5-O-(1-carboxyvinyl)-3-phosphoshikimate = chorismate + phosphate. Its pathway is metabolic intermediate biosynthesis; chorismate biosynthesis; chorismate from D-erythrose 4-phosphate and phosphoenolpyruvate: step 7/7. Functionally, catalyzes the anti-1,4-elimination of the C-3 phosphate and the C-6 proR hydrogen from 5-enolpyruvylshikimate-3-phosphate (EPSP) to yield chorismate, which is the branch point compound that serves as the starting substrate for the three terminal pathways of aromatic amino acid biosynthesis. This reaction introduces a second double bond into the aromatic ring system. The chain is Chorismate synthase from Leuconostoc citreum (strain KM20).